The chain runs to 231 residues: DNA mismatch repair protein MutH (231 aa).

This sequence belongs to the MutH family.

It localises to the cytoplasm. In terms of biological role, sequence-specific endonuclease that cleaves unmethylated GATC sequences. It is involved in DNA mismatch repair. In Salmonella enteritidis PT4 (strain P125109), this protein is DNA mismatch repair protein MutH.